The sequence spans 242 residues: Glucosamine-6-phosphate deaminase (242 aa).

Asp-67 (proton acceptor; for enolization step) is an active-site residue. Asn-137 acts as the For ring-opening step in catalysis. The active-site Proton acceptor; for ring-opening step is His-139. Catalysis depends on Glu-144, which acts as the For ring-opening step.

It belongs to the glucosamine/galactosamine-6-phosphate isomerase family. NagB subfamily.

The enzyme catalyses alpha-D-glucosamine 6-phosphate + H2O = beta-D-fructose 6-phosphate + NH4(+). It functions in the pathway amino-sugar metabolism; N-acetylneuraminate degradation; D-fructose 6-phosphate from N-acetylneuraminate: step 5/5. Functionally, catalyzes the reversible isomerization-deamination of glucosamine 6-phosphate (GlcN6P) to form fructose 6-phosphate (Fru6P) and ammonium ion. The protein is Glucosamine-6-phosphate deaminase of Staphylococcus haemolyticus (strain JCSC1435).